Here is a 35-residue protein sequence, read N- to C-terminus: Augerpeptide hheTx4 (35 aa).

Post-translationally, contains 4 disulfide bonds. Expressed by the venom duct.

The protein localises to the secreted. This Hastula hectica (Sea snail) protein is Augerpeptide hheTx4.